A 339-amino-acid polypeptide reads, in one-letter code: Probable scoulerine-9-O-methyltransferase OMT3B (339 aa).

S-adenosyl-L-methionine is bound at residue methionine 161. Position 164 (aspartate 164) interacts with substrate. S-adenosyl-L-methionine is bound by residues threonine 165, glycine 191, aspartate 214, aspartate 228 to valine 229, and lysine 242. Serine 243–glutamate 247 contributes to the substrate binding site. Histidine 246 (proton acceptor) is an active-site residue.

Belongs to the class I-like SAM-binding methyltransferase superfamily. Cation-independent O-methyltransferase family. COMT subfamily.

The enzyme catalyses (S)-scoulerine + S-adenosyl-L-methionine = (S)-tetrahydrocolumbamine + S-adenosyl-L-homocysteine + H(+). It functions in the pathway alkaloid biosynthesis. Functionally, methyltransferase involved in the biosynthesis of the benzylisoquinoline alkaloid noscapine. Catalyzes the conversion of (S)-scoulerine to (S)-tetrahydrocolumbamine. The protein is Probable scoulerine-9-O-methyltransferase OMT3B of Papaver somniferum (Opium poppy).